Here is a 1219-residue protein sequence, read N- to C-terminus: MSSNIINAITGELITIDITLFISLNEFKKFLINRWQIDFNNLLLLLPFGNKINDRIFIDLIGKKNDQSTIYVFDRRLFSLVNNPDNELSSDYLTNIKNLLKGINHPTNNLNQLVKPVNSPYEEVEINEKFLNYHTITSLITTNLGWLSALEIDMHYFQIQISDTLDYIKNIIESLKICQNYLELYCYDVENLYNSNVKFLNQLANNEILKNWLNYYDNILTKLSDINGNKLSSYLNKNELVSISSKIEELDQRVNSNLKKFKIVIDKNIDLRNNINKEISSLSEKITPSSEKYKLEETMLEKFTELVKNLRNDSKVILEKDENEFDKNYMQNLAKSLEKDKKVTVTNLLTISKALYSQANDISEIKSKLQVDSIKLFGQISFIQIETLNIKKLLLNELNKDLEKYQGFELKLAHVQDIPLVYGLYSIENYRRESWVLQINYKHLDFNKSLKTIVEKEKSTRNKWVDNFGSTAVYFTEDMDTLRDFNYLNNIAKGNQSMIKKLEELFKNISNESHNKNLVFIETYIKEVEDLDLDKDVIELFKRYLAVAQGFVIEQPSTKNIISDKETGELINGYQSRIKKLELLLHSARYSNVESWPTGLLNYSNVKLFRNNVATVNSKLSLQSDYMGNISYGSDQLRIKELENVNKQYKTDFKALTDENKLLKDKVTKFNTDISDIQIERNAYKETLTKLNEELSRLTSIEGDFEKHKGEKEIELKIKIDGLVDSNKTLLNQISDLKIESKELESSNRDLLAQLNQKREEHKVLEDSLKQRENEGLRYKDEYEAKLKELTEKFEADRRALEDEIKAAKEQNMKESMEQQTEQSANQSIDQSIEQSTEQSTEQSTEQSMEQSMEQSMEQSVEQSMEHSMEHSMEQSEKQNMGQNDATIDNQSIETPTSEDMHSLDEQSPESQLLKSNTTELQPIKSQELAEDSKAIELKNIQEMLVSKLYEIFSSNVFILENIGLLLTFDEHDNFQIRRVKGLKKNLNQSVLEETGLLNEIEMPVKSDVFSEVKTLFSNYKETFDSRSYISLLSKINQLYDCKLYETAVIKRFEDIELLAKKLAKENKAKKNLFEKYRCERITLKNFEVGDLALFLPTRENCITEDVSVASWNSSFSSVDLSTPPPFGEPITNQSHSGTAKDKNKHNLEKRPWAAFTAFEETARYFLKDPENIPNNREWFVGKIMHLQRFVVEDHISNPYKLPKGAVWFQVTATVVSHQ.

A coiled-coil region spans residues 636–824 (QLRIKELENV…ESMEQQTEQS (189 aa)). 2 disordered regions span residues 811 to 882 (QNMK…QNMG) and 895 to 926 (TPTSEDMHSLDEQSPESQLLKSNTTELQPIKS). The span at 818–830 (EQQTEQSANQSID) shows a compositional bias: polar residues. Low complexity predominate over residues 831–863 (QSIEQSTEQSTEQSTEQSMEQSMEQSMEQSVEQ). The span at 864 to 877 (SMEHSMEHSMEQSE) shows a compositional bias: basic and acidic residues. Residues 909 to 925 (PESQLLKSNTTELQPIK) show a composition bias toward polar residues. The stretch at 1052 to 1081 (RFEDIELLAKKLAKENKAKKNLFEKYRCER) forms a coiled coil.

This sequence belongs to the ATG11 family. In terms of assembly, homodimer.

The protein localises to the preautophagosomal structure membrane. It is found in the vacuole membrane. Functionally, involved in cytoplasm to vacuole transport (Cvt), pexophagy, mitophagy and nucleophagy. Recruits mitochondria for their selective degradation via autophagy (mitophagy) during starvation. Works as scaffold proteins that recruit ATG proteins to the pre-autophagosome (PAS), the site of vesicle/autophagosome formation. Required for the Cvt vesicles completion. The protein is Autophagy-related protein 11 (ATG11) of Vanderwaltozyma polyspora (strain ATCC 22028 / DSM 70294 / BCRC 21397 / CBS 2163 / NBRC 10782 / NRRL Y-8283 / UCD 57-17) (Kluyveromyces polysporus).